The following is a 178-amino-acid chain: uncharacterized protein (178 aa).

It belongs to the mimivirus L114/R131 family.

This is an uncharacterized protein from Acanthamoeba polyphaga mimivirus (APMV).